Consider the following 465-residue polypeptide: MDHQQPIQVIGGGLAGTEAAWQIAQAGWPVILHEMRSVEEERLTPAHHTDQLAELVCSNSFGAQASDRAAGLLHAELRQLGSIIIRKADEHQVPAGGALAVDRGVFSRNLTETLAEHPNVELRRGEVPTLPIDGTVVLTSGPLTSAALTESLHQFTGQDYLSFFDAASPIIVGESINRDVAFLASRYDRGEAAYLNCPMNREQYLAFWQALCAAEQAELKDFEKETAKFFEGCLPIEEMARRGEDTMRYGPLKPVGLFDARYGDFKAPENQKYRPYAVAQLRQEDKAGKLWNLVGFQTNLRWGEQKRVFQMIPGLESAEFVRMGVMHRNTFINAPELLHPTLQFKQRPTLLAAGQLIGTEGYTAATAGGWLAGTNAVRLAQGLNPVVLPTTTMSGSLFEFISSATPKHFQPMPPNFGIIPDLPQRVRNKRERYGVYRDRALADLTAWIAEPSLFRQTVAANSASM.

11–16 lines the FAD pocket; that stretch reads GGGLAG.

This sequence belongs to the MnmG family. TrmFO subfamily. FAD serves as cofactor.

The protein localises to the cytoplasm. It catalyses the reaction uridine(54) in tRNA + (6R)-5,10-methylene-5,6,7,8-tetrahydrofolate + NADH + H(+) = 5-methyluridine(54) in tRNA + (6S)-5,6,7,8-tetrahydrofolate + NAD(+). It carries out the reaction uridine(54) in tRNA + (6R)-5,10-methylene-5,6,7,8-tetrahydrofolate + NADPH + H(+) = 5-methyluridine(54) in tRNA + (6S)-5,6,7,8-tetrahydrofolate + NADP(+). Catalyzes the folate-dependent formation of 5-methyl-uridine at position 54 (M-5-U54) in all tRNAs. This chain is Methylenetetrahydrofolate--tRNA-(uracil-5-)-methyltransferase TrmFO, found in Acaryochloris marina (strain MBIC 11017).